The primary structure comprises 118 residues: Cycloviolacin-O8 (118 aa).

The N-terminal stretch at Met1–Ala22 is a signal peptide. Positions Thr23–Gly84 are excised as a propeptide. The segment at residues Gly85 to Asn115 is a cross-link (cyclopeptide (Gly-Asn)). 3 cysteine pairs are disulfide-bonded: Cys89–Cys105, Cys93–Cys107, and Cys98–Cys112. Positions Ser116–Ala118 are excised as a propeptide.

Cycloviolacin-O8 is a cyclic peptide. As to expression, expressed in leaves, petals, petioles and roots but not in runners (at protein level).

Its function is as follows. Probably participates in a plant defense mechanism. The polypeptide is Cycloviolacin-O8 (Voc1) (Viola odorata (Sweet violet)).